We begin with the raw amino-acid sequence, 370 residues long: tRNA-specific 2-thiouridylase MnmA (370 aa).

ATP-binding positions include 6-13 and L32; that span reads AMSGGVDS. The active-site Nucleophile is the C101. Residues C101 and C193 are joined by a disulfide bond. G125 is an ATP binding site. The interval 143–145 is interaction with tRNA; the sequence is KDQ. The active-site Cysteine persulfide intermediate is C193.

This sequence belongs to the MnmA/TRMU family.

It is found in the cytoplasm. The catalysed reaction is S-sulfanyl-L-cysteinyl-[protein] + uridine(34) in tRNA + AH2 + ATP = 2-thiouridine(34) in tRNA + L-cysteinyl-[protein] + A + AMP + diphosphate + H(+). Catalyzes the 2-thiolation of uridine at the wobble position (U34) of tRNA, leading to the formation of s(2)U34. This is tRNA-specific 2-thiouridylase MnmA from Rhodococcus erythropolis (strain PR4 / NBRC 100887).